The sequence spans 359 residues: 3-dehydroquinate synthase (359 aa).

NAD(+)-binding positions include 71–76, 105–109, 129–130, Lys-142, and Lys-151; these read DGEAYK, GVIGD, and TT. Positions 184, 247, and 264 each coordinate Zn(2+).

It belongs to the sugar phosphate cyclases superfamily. Dehydroquinate synthase family. It depends on Co(2+) as a cofactor. Requires Zn(2+) as cofactor. The cofactor is NAD(+).

The protein resides in the cytoplasm. The enzyme catalyses 7-phospho-2-dehydro-3-deoxy-D-arabino-heptonate = 3-dehydroquinate + phosphate. Its pathway is metabolic intermediate biosynthesis; chorismate biosynthesis; chorismate from D-erythrose 4-phosphate and phosphoenolpyruvate: step 2/7. In terms of biological role, catalyzes the conversion of 3-deoxy-D-arabino-heptulosonate 7-phosphate (DAHP) to dehydroquinate (DHQ). The sequence is that of 3-dehydroquinate synthase from Burkholderia ambifaria (strain ATCC BAA-244 / DSM 16087 / CCUG 44356 / LMG 19182 / AMMD) (Burkholderia cepacia (strain AMMD)).